Here is a 440-residue protein sequence, read N- to C-terminus: ATP-dependent protease ATPase subunit HslU (440 aa).

Residues Val18, 60–65, Asp254, Glu319, and Arg391 each bind ATP; that span reads GVGKTE.

Belongs to the ClpX chaperone family. HslU subfamily. In terms of assembly, a double ring-shaped homohexamer of HslV is capped on each side by a ring-shaped HslU homohexamer. The assembly of the HslU/HslV complex is dependent on binding of ATP.

Its subcellular location is the cytoplasm. ATPase subunit of a proteasome-like degradation complex; this subunit has chaperone activity. The binding of ATP and its subsequent hydrolysis by HslU are essential for unfolding of protein substrates subsequently hydrolyzed by HslV. HslU recognizes the N-terminal part of its protein substrates and unfolds these before they are guided to HslV for hydrolysis. The protein is ATP-dependent protease ATPase subunit HslU of Cellvibrio japonicus (strain Ueda107) (Pseudomonas fluorescens subsp. cellulosa).